The sequence spans 44 residues: Brevinin-1PLa (44 aa).

The propeptide occupies 1–18 (NAEEERRDEPDETDVEVE). Cys38 and Cys44 are joined by a disulfide.

In terms of tissue distribution, expressed by the skin glands.

The protein resides in the secreted. Antimicrobial peptide. This is Brevinin-1PLa from Lithobates palustris (Pickerel frog).